A 179-amino-acid chain; its full sequence is MQVILKEDVVNLGYKDDIVTVKDGYGRNFLIPQGKAVIASESAKKVLAENLRQRAHKIAQIKKEAEEKAASMQGISLTIKAKTSSTGTIFGSVTNIQIAEELAKKGVEVDRKIIVLKPAVKEVGNYTAVVRLHKEVTVEIPFEVVSENETIIEAKPEGAPVPVAEEPAAEAEQAEVAAE.

The interval 156 to 179 (PEGAPVPVAEEPAAEAEQAEVAAE) is disordered. Positions 157–166 (EGAPVPVAEE) are enriched in low complexity. Acidic residues predominate over residues 167–179 (PAAEAEQAEVAAE).

This sequence belongs to the bacterial ribosomal protein bL9 family.

Binds to the 23S rRNA. This chain is Large ribosomal subunit protein bL9, found in Porphyromonas gingivalis (strain ATCC 33277 / DSM 20709 / CIP 103683 / JCM 12257 / NCTC 11834 / 2561).